The following is a 93-amino-acid chain: Small ribosomal subunit protein uS19 (93 aa).

Positions 73–93 (EFSPTRTYRGHDKKDKKIQKK) are disordered.

It belongs to the universal ribosomal protein uS19 family.

Functionally, protein S19 forms a complex with S13 that binds strongly to the 16S ribosomal RNA. The protein is Small ribosomal subunit protein uS19 of Phytoplasma mali (strain AT).